The sequence spans 365 residues: Anthranilate phosphoribosyltransferase (365 aa).

5-phospho-alpha-D-ribose 1-diphosphate is bound by residues glycine 96, 99–100, threonine 104, 106–109, 124–132, and serine 136; these read GD, NIST, and KHGNRSVSS. Glycine 96 contacts anthranilate. Serine 108 is a Mg(2+) binding site. Asparagine 127 is an anthranilate binding site. Arginine 182 contacts anthranilate. Residues aspartate 240 and glutamate 241 each contribute to the Mg(2+) site.

Belongs to the anthranilate phosphoribosyltransferase family. Homodimer. Mg(2+) is required as a cofactor.

The enzyme catalyses N-(5-phospho-beta-D-ribosyl)anthranilate + diphosphate = 5-phospho-alpha-D-ribose 1-diphosphate + anthranilate. It participates in amino-acid biosynthesis; L-tryptophan biosynthesis; L-tryptophan from chorismate: step 2/5. In terms of biological role, catalyzes the transfer of the phosphoribosyl group of 5-phosphorylribose-1-pyrophosphate (PRPP) to anthranilate to yield N-(5'-phosphoribosyl)-anthranilate (PRA). The sequence is that of Anthranilate phosphoribosyltransferase from Colwellia psychrerythraea (strain 34H / ATCC BAA-681) (Vibrio psychroerythus).